The sequence spans 406 residues: Mitochondrial potassium channel (406 aa).

The N-terminal 35 residues, 1 to 35, are a transit peptide targeting the mitochondrion; the sequence is MTGCSPVFAMQHVVGVPRILVRRTFLGTDVTMTRT. Residues 36–198 are Mitochondrial matrix-facing; it reads LCSPGPREKR…KERTRAERTK (163 aa). Residues 113–140 are a coiled coil; the sequence is VREAREGLEAQQTKLKEVRDRLDRVSRE. Residues 199–219 traverse the membrane as a helical segment; the sequence is NWSLIGSVLGALIGVAGSTYV. The Mitochondrial intermembrane segment spans residues 220 to 382; the sequence is NRVRLQELKA…LEAQANRNTV (163 aa). Residues 383-403 form a helical membrane-spanning segment; the sequence is SSTLVTCVTFLATLPLLYMLF. Residues 404–406 lie on the Mitochondrial matrix side of the membrane; sequence KTS.

The mitochondrial potassium channel (mitoK(ATP)) is composed of 4 subunits of CCDC51/MITOK and 4 subunits of ABCB8/MITOSUR.

The protein localises to the mitochondrion inner membrane. It carries out the reaction K(+)(in) = K(+)(out). Its activity is regulated as follows. Inhibited by ATP via mitoK(ATP) channel. Functionally, pore-forming subunit of the mitochondrial ATP-gated potassium channel (mitoK(ATP)). Together with ATP-binding subunit ABCB8/MITOSUR of the mitoK(ATP) channel, mediates ATP-dependent K(+) currents across the mitochondrial inner membrane. An increase in ATP intracellular levels closes the channel, inhibiting K(+) transport, whereas a decrease in ATP levels enhances K(+) uptake in the mitochondrial matrix. May contribute to the homeostatic control of cellular metabolism under stress conditions by regulating the mitochondrial matrix volume. The chain is Mitochondrial potassium channel from Mus musculus (Mouse).